We begin with the raw amino-acid sequence, 338 residues long: Ketol-acid reductoisomerase (NADP(+)) (338 aa).

In terms of domain architecture, KARI N-terminal Rossmann spans Met1 to Thr181. Residues Tyr24–Gln27, Arg47, and Ser52 each bind NADP(+). The active site involves His107. Gly133 contacts NADP(+). Positions Asn182 to Ile327 constitute a KARI C-terminal knotted domain. Mg(2+)-binding residues include Asp190, Glu194, Glu226, and Glu230. Position 251 (Ser251) interacts with substrate.

The protein belongs to the ketol-acid reductoisomerase family. It depends on Mg(2+) as a cofactor.

It carries out the reaction (2R)-2,3-dihydroxy-3-methylbutanoate + NADP(+) = (2S)-2-acetolactate + NADPH + H(+). The enzyme catalyses (2R,3R)-2,3-dihydroxy-3-methylpentanoate + NADP(+) = (S)-2-ethyl-2-hydroxy-3-oxobutanoate + NADPH + H(+). The protein operates within amino-acid biosynthesis; L-isoleucine biosynthesis; L-isoleucine from 2-oxobutanoate: step 2/4. It participates in amino-acid biosynthesis; L-valine biosynthesis; L-valine from pyruvate: step 2/4. Its function is as follows. Involved in the biosynthesis of branched-chain amino acids (BCAA). Catalyzes an alkyl-migration followed by a ketol-acid reduction of (S)-2-acetolactate (S2AL) to yield (R)-2,3-dihydroxy-isovalerate. In the isomerase reaction, S2AL is rearranged via a Mg-dependent methyl migration to produce 3-hydroxy-3-methyl-2-ketobutyrate (HMKB). In the reductase reaction, this 2-ketoacid undergoes a metal-dependent reduction by NADPH to yield (R)-2,3-dihydroxy-isovalerate. The protein is Ketol-acid reductoisomerase (NADP(+)) of Paracidovorax citrulli (strain AAC00-1) (Acidovorax citrulli).